A 566-amino-acid chain; its full sequence is ATP-binding protein SyrD (566 aa).

Residues 22 to 301 enclose the ABC transmembrane type-1 domain; the sequence is HPWLTFFTLL…LVSAMPMLAQ (280 aa). Helical transmembrane passes span 24–44, 61–81, 132–152, 158–178, 250–270, and 279–299; these read WLTF…IAVV, LFWF…ASLF, LLIM…IAYL, VVFA…LLFF, QLTL…FAVI, and VLAV…MPML. One can recognise an ABC transporter domain in the interval 343 to 566; that stretch reads IQLKNVHMNY…VKCAVEGKRA (224 aa). Position 380-387 (380-387) interacts with ATP; it reads GGNGCGKS.

The protein belongs to the ABC transporter superfamily. As to quaternary structure, dimer.

Its subcellular location is the cell inner membrane. ATP-driven efflux pump necessary for the secretion of syringomycin. May specifically bind syringomycin and translocate it to the periplasmic space. SyrD is also required for full expression of the syrB gene. This Pseudomonas syringae pv. syringae protein is ATP-binding protein SyrD (syrD).